Reading from the N-terminus, the 169-residue chain is Large ribosomal subunit protein uL15 (169 aa).

The segment covering 1–13 has biased composition (basic and acidic residues); sequence MKLNEIRDNEGAT. The tract at residues 1 to 40 is disordered; the sequence is MKLNEIRDNEGATKNRMRVGRGIGSGKGKTGGRGVKGQKA. Residues 21–35 show a composition bias toward gly residues; that stretch reads RGIGSGKGKTGGRGV.

This sequence belongs to the universal ribosomal protein uL15 family. In terms of assembly, part of the 50S ribosomal subunit.

Functionally, binds to the 23S rRNA. In Methylorubrum populi (strain ATCC BAA-705 / NCIMB 13946 / BJ001) (Methylobacterium populi), this protein is Large ribosomal subunit protein uL15.